We begin with the raw amino-acid sequence, 51 residues long: Large ribosomal subunit protein eL39 (51 aa).

Belongs to the eukaryotic ribosomal protein eL39 family.

The sequence is that of Large ribosomal subunit protein eL39 from Thermococcus sibiricus (strain DSM 12597 / MM 739).